Consider the following 391-residue polypeptide: GTPase Obg (391 aa).

Positions 1–159 (MKFIDEALIR…RDLQLELMLL (159 aa)) constitute an Obg domain. The 174-residue stretch at 160-333 (ADVGMLGLPN…LTRDIMDFIE (174 aa)) folds into the OBG-type G domain. GTP is bound by residues 166–173 (GLPNAGKS), 191–195 (FTTLV), 213–216 (DIPG), 283–286 (NKID), and 314–316 (SAA). The Mg(2+) site is built by S173 and T193. The tract at residues 361 to 391 (QNPITEDDWDDLDDDGWTEEDDEGVEFIYKP) is disordered. Positions 365–385 (TEDDWDDLDDDGWTEEDDEGV) are enriched in acidic residues.

It belongs to the TRAFAC class OBG-HflX-like GTPase superfamily. OBG GTPase family. In terms of assembly, monomer. Mg(2+) is required as a cofactor.

It is found in the cytoplasm. An essential GTPase which binds GTP, GDP and possibly (p)ppGpp with moderate affinity, with high nucleotide exchange rates and a fairly low GTP hydrolysis rate. Plays a role in control of the cell cycle, stress response, ribosome biogenesis and in those bacteria that undergo differentiation, in morphogenesis control. In Glaesserella parasuis serovar 5 (strain SH0165) (Haemophilus parasuis), this protein is GTPase Obg.